A 604-amino-acid polypeptide reads, in one-letter code: Vacuolar protein sorting-associated protein 64 (604 aa).

Residues 1 to 89 (MVELEKRRRP…SVHQVSQQQQ (89 aa)) form a disordered region. Residues 1–578 (MVELEKRRRP…LGVVEGKRTR (578 aa)) are Cytoplasmic-facing. The span at 22 to 34 (DQSNSQGMTKTPE) shows a compositional bias: polar residues. Composition is skewed to low complexity over residues 44–57 (RARS…SRSN) and 77–89 (SPPS…QQQQ). An FHA domain is found at 185-257 (LKLGRPVTNS…NGTFVNGVKI (73 aa)). The stretch at 404–563 (NLINMIKTLT…EEKKDTEDTL (160 aa)) forms a coiled coil. The tract at residues 539–561 (INNDNNAKVKQNDSREEKKDTED) is disordered. Residues 548–560 (KQNDSREEKKDTE) show a composition bias toward basic and acidic residues. Residues 579-598 (VSKGMLFGVVAISFGLVATA) form a helical; Anchor for type IV membrane protein membrane-spanning segment. Over 599-604 (VKQLPQ) the chain is Lumenal.

As to quaternary structure, component of a complex at least composed of FAR3, FAR7, FAR8, FAR10, FAR11 and VPS64.

The protein resides in the endoplasmic reticulum membrane. In terms of biological role, participates in the control of the reentry into the cell cycle following pheromone treatment. Involved in vacuolar protein sorting. This Saccharomyces cerevisiae (strain ATCC 204508 / S288c) (Baker's yeast) protein is Vacuolar protein sorting-associated protein 64 (VPS64).